We begin with the raw amino-acid sequence, 135 residues long: Probable transcription factor At2g20613 (135 aa).

The tract at residues 1–104 is disordered; sequence MSHKRFNPLT…KRGGGGGEEA (104 aa). A compositionally biased stretch (acidic residues) spans 28–41; the sequence is DSSSDEETDSDSDS. Over residues 62–80 the composition is skewed to basic and acidic residues; the sequence is KSVKISEKSVAKRSRETHE.

Belongs to the GeBP family.

The chain is Probable transcription factor At2g20613 from Arabidopsis thaliana (Mouse-ear cress).